The sequence spans 879 residues: MDPTAGSKKEPGGGAATEEGVNRIAVPKPPSIEEFSIVKPISRGAFGKVYLGQKGGKLYAVKVVKKADMINKNMTHQVQAERDALALSKSPFIVHLYYSLQSANNVYLVMEYLIGGDVKSLLHIYGYFDEEMAVKYISEVALALDYLHRHGIIHRDLKPDNMLISNEGHIKLTDFGLSKVTLNRDINMMDILTTPSMAKPRQDYSRTPGQVLSLISSLGFNTPIAEKNQDPANILSACLSETSQLSQGLVCPMSVDQKDTTPYSSKLLKSCLETVASNPGMPVKCLTSNLLQSRKRLATSSASSQSHTFISSVESECHSSPKWEKDCQESDEALGPTMMSWNAVEKLCAKSANAIETKGFNKKDLELALSPIHNSSALPTTGRSCVNLAKKCFSGEVSWEAVELDVNNINMDTDTSQLGFHQSNQWAVDSGGISEEHLGKRSLKRNFELVDSSPCKKIIQNKKTCVEYKHNEMTNCYTNQNTGLTVEVQDLKLSVHKSQQNDCANKENIVNSFTDKQQTPEKLPIPMIAKNLMCELDEDCEKNSKRDYLSSSFLCSDDDRASKNISMNSDSSFPGISIMESPLESQPLDSDRSIKESSFEESNIEDPLIVTPDCQEKTSPKGVENPAVQESNQKMLGPPLEVLKTLASKRNAVAFRSFNSHINASNNSEPSRMNMTSLDAMDISCAYSGSYPMAITPTQKRRSCMPHQQTPNQIKSGTPYRTPKSVRRGVAPVDDGRILGTPDYLAPELLLGRAHGPAVDWWALGVCLFEFLTGIPPFNDETPQQVFQNILKRDIPWPEGEEKLSDNAQSAVEILLTIDDTKRAGMKELKRHPLFSDVDWENLQHQTMPFIPQPDDETDTSYFEARNTAQHLTVSGFSL.

The residue at position 1 (M1) is an N-acetylmethionine. Residues 1-23 (MDPTAGSKKEPGGGAATEEGVNR) are disordered. The Protein kinase domain maps to 35 to 835 (FSIVKPISRG…MKELKRHPLF (801 aa)). Residues 41 to 49 (ISRGAFGKV) and K62 each bind ATP. D156 (proton acceptor) is an active-site residue. Phosphothreonine is present on residues T207 and T222. Residues S293, S370, and S453 each carry the phosphoserine modification. The residue at position 519 (T519) is a Phosphothreonine. S552 and S556 each carry phosphoserine. Residues 566–632 (SMNSDSSFPG…VENPAVQESN (67 aa)) form a disordered region. Residues 589-598 (DSDRSIKESS) show a composition bias toward basic and acidic residues. Phosphoserine occurs at positions 631, 657, and 668. The segment at 700–728 (KRRSCMPHQQTPNQIKSGTPYRTPKSVRR) is disordered. Residues 706–716 (PHQQTPNQIKS) are compositionally biased toward polar residues. T722 is subject to Phosphothreonine. At S725 the chain carries Phosphoserine. T741 bears the Phosphothreonine mark. The 44-residue stretch at 836–879 (SDVDWENLQHQTMPFIPQPDDETDTSYFEARNTAQHLTVSGFSL) folds into the AGC-kinase C-terminal domain. 2 positions are modified to phosphoserine: S875 and S878.

Belongs to the protein kinase superfamily. AGC Ser/Thr protein kinase family. Post-translationally, phosphorylation at Thr-741 by CDK1 during M phase activates its kinase activity. Maximum phosphorylation occurs in prometaphase.

It localises to the cytoplasm. The protein resides in the cytoskeleton. It is found in the microtubule organizing center. Its subcellular location is the centrosome. The protein localises to the nucleus. It localises to the cleavage furrow. The enzyme catalyses L-seryl-[protein] + ATP = O-phospho-L-seryl-[protein] + ADP + H(+). It catalyses the reaction L-threonyl-[protein] + ATP = O-phospho-L-threonyl-[protein] + ADP + H(+). In terms of biological role, serine/threonine kinase that plays a key role in M phase by acting as a regulator of mitosis entry and maintenance. Acts by promoting the inactivation of protein phosphatase 2A (PP2A) during M phase: does not directly inhibit PP2A but acts by mediating phosphorylation and subsequent activation of ARPP19 and ENSA at 'Ser-62' and 'Ser-67', respectively. ARPP19 and ENSA are phosphatase inhibitors that specifically inhibit the PPP2R2D (PR55-delta) subunit of PP2A. Inactivation of PP2A during M phase is essential to keep cyclin-B1-CDK1 activity high. Following DNA damage, it is also involved in checkpoint recovery by being inhibited. Phosphorylates histone protein in vitro; however such activity is unsure in vivo. May be involved in megakaryocyte differentiation. The chain is Serine/threonine-protein kinase greatwall (MASTL) from Homo sapiens (Human).